Here is a 579-residue protein sequence, read N- to C-terminus: Kelch repeat and BTB domain-containing protein F47D12.7 (579 aa).

The BTB domain maps to 51 to 119 (PTVTLVLRNN…PKAFEQGIKP (69 aa)). Kelch repeat units follow at residues 266–316 (AIVC…VVED), 317–363 (KLIV…RVND), 369–415 (LVFA…TIDN), 417–463 (IVAI…SIMN), 465–511 (VCMI…QMDT), and 513–559 (YVYV…TLSD).

The protein is Kelch repeat and BTB domain-containing protein F47D12.7 of Caenorhabditis elegans.